Reading from the N-terminus, the 166-residue chain is Cytochrome c-type biogenesis protein CcmE (166 aa).

At 1-13 (MNFLPKSRKARRR) the chain is on the cytoplasmic side. The chain crosses the membrane as a helical; Signal-anchor for type II membrane protein span at residues 14-34 (LTILAVAAPVVALAVGLALWG). Residues 35-166 (MRDAISLFYT…QGYKPGKPNT (132 aa)) are Periplasmic-facing. Residues histidine 128 and tyrosine 132 each coordinate heme. The segment at 143–166 (EQGEWRGDGQAPSYQGYKPGKPNT) is disordered.

It belongs to the CcmE/CycJ family.

It localises to the cell inner membrane. Its function is as follows. Heme chaperone required for the biogenesis of c-type cytochromes. Transiently binds heme delivered by CcmC and transfers the heme to apo-cytochromes in a process facilitated by CcmF and CcmH. The polypeptide is Cytochrome c-type biogenesis protein CcmE (Caulobacter sp. (strain K31)).